The sequence spans 289 residues: Probable endonuclease 4 (289 aa).

Residues His-76, His-116, Glu-152, Asp-186, His-189, His-220, Asp-233, His-235, and Glu-265 each coordinate Zn(2+).

The protein belongs to the AP endonuclease 2 family. The cofactor is Zn(2+).

It catalyses the reaction Endonucleolytic cleavage to 5'-phosphooligonucleotide end-products.. Functionally, endonuclease IV plays a role in DNA repair. It cleaves phosphodiester bonds at apurinic or apyrimidinic (AP) sites, generating a 3'-hydroxyl group and a 5'-terminal sugar phosphate. The protein is Probable endonuclease 4 of Malacoplasma penetrans (strain HF-2) (Mycoplasma penetrans).